Consider the following 262-residue polypeptide: Short-chain Z-isoprenyl diphosphate synthase (262 aa).

Residue Asp40 is part of the active site. Asp40 is a Mg(2+) binding site. Residues 41–44, Trp45, and 86–88 each bind substrate; these read GNRR and STE. Catalysis depends on Asn89, which acts as the Proton acceptor. Substrate contacts are provided by residues Arg92, Arg211, and 217 to 219; that span reads RLS. Glu230 provides a ligand contact to Mg(2+).

Belongs to the UPP synthase family. Z-FPP synthase subfamily. It depends on Mg(2+) as a cofactor.

It catalyses the reaction isopentenyl diphosphate + (2E)-geranyl diphosphate = (2Z,6E)-farnesyl diphosphate + diphosphate. It functions in the pathway phospholipid metabolism; decaprenyl phosphate biosynthesis. In terms of biological role, generates Z-farnesyl diphosphate (Z-FPP) from isopentenyl pyrophosphate (IPP). Z-FPP is the precursor of decaprenyl diphosphate, which has a central role in the biosynthesis of the mycobacterial cell wall. The polypeptide is Short-chain Z-isoprenyl diphosphate synthase (Mycobacterium bovis (strain ATCC BAA-935 / AF2122/97)).